The following is a 93-amino-acid chain: YcgL domain-containing protein Spea_2443 (93 aa).

A YcgL domain is found at 1-85 (MICAVYKSLR…PVVNLLEQHK (85 aa)).

This chain is YcgL domain-containing protein Spea_2443, found in Shewanella pealeana (strain ATCC 700345 / ANG-SQ1).